The primary structure comprises 1142 residues: Enamelin (1142 aa).

The signal sequence occupies residues 1 to 39 (MLVLRCRLGTSFPKLDNLVPKGKMKILLVFLGLLGNSVA). 6 disordered regions span residues 88 to 193 (QYQM…ISNE), 214 to 326 (YYSE…PNIR), 398 to 671 (PANL…QNRW), 874 to 955 (CCAG…LRRN), 1020 to 1048 (VIGTPDEGSNPEGIQSQVQENESERQQQR), and 1062 to 1092 (LAKHHSSTTGTPSSDGRQSPFDGDSITPTEN). Basic residues predominate over residues 103-114 (HPRKSSAPKRHN). N-linked (GlcNAc...) asparagine glycans are attached at residues N114 and N126. The segment covering 117–128 (DQTQETQKPNQT) has biased composition (polar residues). Residues 140-162 (KQPSHNQPQPEEEAQPPQAFPPF) are compositionally biased toward low complexity. The segment covering 170 to 186 (QQPPWQIPQRLPPPGYG) has biased composition (pro residues). 2 positions are modified to phosphoserine: S191 and S216. Basic and acidic residues predominate over residues 223–234 (DFEKPKEEDPPK). The span at 240 to 285 (TEPTANSTVTETNSTQPNPKGSQGGNDTSPTGNSTPGLNTGNNPPA) shows a compositional bias: polar residues. N245, N252, N265, and N296 each carry an N-linked (GlcNAc...) asparagine glycan. The span at 429 to 442 (RNEKIQNPKEKPLG) shows a compositional bias: basic and acidic residues. Polar residues-rich tracts occupy residues 452 to 470 (KNPTSPWRNSQQYEVNKSN), 507 to 516 (SDGQTQSQNL), and 531 to 544 (SETNQSELKHSSYQ). Residue N467 is glycosylated (N-linked (GlcNAc...) asparagine). An N-linked (GlcNAc...) asparagine glycan is attached at N534. Over residues 556–588 (AKEHFPAGRNTWDHQEISPPFKEDPGRQEEHLP) the composition is skewed to basic and acidic residues. Residues 652 to 661 (NEEDPVDPTG) show a composition bias toward acidic residues. Residues 924-934 (SPTSILPGQRN) show a composition bias toward polar residues. N-linked (GlcNAc...) asparagine glycosylation occurs at N934. A compositionally biased stretch (basic and acidic residues) spans 935–951 (SSEKRESQNPFRDDVST). An N-linked (GlcNAc...) asparagine glycan is attached at N1040. Polar residues predominate over residues 1068 to 1078 (STTGTPSSDGR).

Post-translationally, phosphorylated by FAM20C in vitro. In terms of tissue distribution, expressed in tooth particularly in odontoblast, ameloblast and cementoblast.

It is found in the secreted. The protein localises to the extracellular space. It localises to the extracellular matrix. Its function is as follows. Involved in the mineralization and structural organization of enamel. Involved in the extension of enamel during the secretory stage of dental enamel formation. The sequence is that of Enamelin (ENAM) from Homo sapiens (Human).